We begin with the raw amino-acid sequence, 394 residues long: Protein TsgA homolog (394 aa).

The next 12 membrane-spanning stretches (helical) occupy residues 11-31 (WISY…GIVM), 51-71 (FLNA…EIIP), 76-96 (LVFG…GHNL), 101-121 (ISMF…TFLV), 134-154 (LLFT…AAAM), 162-182 (WYWV…LTLC), 206-226 (VGVL…LGFI), 246-266 (QLVS…SFIL), 274-294 (IVTV…STDN), 302-322 (ILAL…LGSL), 334-354 (FILT…GPIV), and 363-383 (LETA…LGFF).

It belongs to the major facilitator superfamily. TsgA family.

The protein resides in the cell inner membrane. This chain is Protein TsgA homolog, found in Yersinia pestis bv. Antiqua (strain Antiqua).